The sequence spans 360 residues: Dihydroorotate dehydrogenase (quinone) (360 aa).

FMN-binding positions include 66 to 70 (AGFDK) and threonine 90. Substrate is bound at residue lysine 70. 115–119 (NRMGF) provides a ligand contact to substrate. FMN is bound by residues asparagine 143 and asparagine 176. Asparagine 176 serves as a coordination point for substrate. Serine 179 (nucleophile) is an active-site residue. Position 181 (asparagine 181) interacts with substrate. Positions 212 and 240 each coordinate FMN. 241-242 (NT) lines the substrate pocket. FMN is bound by residues glycine 264, glycine 293, and 314–315 (YT).

The protein belongs to the dihydroorotate dehydrogenase family. Type 2 subfamily. As to quaternary structure, monomer. Requires FMN as cofactor.

It localises to the cell membrane. It catalyses the reaction (S)-dihydroorotate + a quinone = orotate + a quinol. The protein operates within pyrimidine metabolism; UMP biosynthesis via de novo pathway; orotate from (S)-dihydroorotate (quinone route): step 1/1. Its function is as follows. Catalyzes the conversion of dihydroorotate to orotate with quinone as electron acceptor. The protein is Dihydroorotate dehydrogenase (quinone) of Mycobacterium marinum (strain ATCC BAA-535 / M).